The following is a 100-amino-acid chain: Small ribosomal subunit protein uS14c (100 aa).

Belongs to the universal ribosomal protein uS14 family. Part of the 30S ribosomal subunit.

It localises to the plastid. The protein resides in the chloroplast. Binds 16S rRNA, required for the assembly of 30S particles. This chain is Small ribosomal subunit protein uS14c, found in Cicer arietinum (Chickpea).